Here is a 419-residue protein sequence, read N- to C-terminus: Peroxisomal membrane protein PMP47B (419 aa).

Solcar repeat units lie at residues 6–120 (YDDL…TGKT), 142–230 (LSVW…LKSF), and 239–369 (VTPV…LLIL). A helical membrane pass occupies residues 12–32 (AFAGAGGGLLSMTLTYPLVTL). The segment covering 44–53 (KNEEEEKENS) has biased composition (basic and acidic residues). The segment at 44 to 69 (KNEEEEKENSNEDGSLSPKSSNTSNI) is disordered. Residues 56–69 (DGSLSPKSSNTSNI) show a composition bias toward polar residues. 3 helical membrane-spanning segments follow: residues 98-118 (SALF…ELTG), 204-224 (FTGI…YTIF), and 245-265 (LLLG…YITL). Positions 274-305 (MTENNEDSEKERTDSVQSLPEDGSDEDNSKEN) are disordered. Transmembrane regions (helical) follow at residues 310–330 (TINK…IIGY) and 349–369 (LLQS…LLIL).

This sequence belongs to the mitochondrial carrier (TC 2.A.29) family.

It is found in the peroxisome membrane. May have transport activity. The polypeptide is Peroxisomal membrane protein PMP47B (PMP47B) (Candida boidinii (Yeast)).